A 447-amino-acid polypeptide reads, in one-letter code: Sporulation protein YpeB (447 aa).

Belongs to the YpeB family.

In terms of biological role, required for spore cortex hydrolysis during germination. Appears to be required for either expression, localization, activation or function of SleB. The chain is Sporulation protein YpeB from Halalkalibacterium halodurans (strain ATCC BAA-125 / DSM 18197 / FERM 7344 / JCM 9153 / C-125) (Bacillus halodurans).